Consider the following 144-residue polypeptide: L-fucose mutarotase (144 aa).

H22 serves as the catalytic Proton donor. Residues D30, R109, and 131 to 133 (YGN) contribute to the substrate site.

It belongs to the RbsD / FucU family. FucU mutarotase subfamily. Homodecamer.

The protein localises to the cytoplasm. The enzyme catalyses alpha-L-fucose = beta-L-fucose. The protein operates within carbohydrate metabolism; L-fucose metabolism. In terms of biological role, involved in the anomeric conversion of L-fucose. In Haemophilus influenzae (strain PittGG), this protein is L-fucose mutarotase.